We begin with the raw amino-acid sequence, 93 residues long: UPF0337 protein Bd3330 (93 aa).

This sequence belongs to the UPF0337 (CsbD) family.

The chain is UPF0337 protein Bd3330 from Bdellovibrio bacteriovorus (strain ATCC 15356 / DSM 50701 / NCIMB 9529 / HD100).